The chain runs to 641 residues: Threonine--tRNA ligase (641 aa).

The TGS domain maps to 1–61; that stretch reads MPAITLPDGS…DDDVQLEIVT (61 aa). Residues 242–533 form a catalytic region; it reads DHRRIGRAQN…LIEHYAGALP (292 aa). 3 residues coordinate Zn(2+): C333, H384, and H510.

Belongs to the class-II aminoacyl-tRNA synthetase family. As to quaternary structure, homodimer. Requires Zn(2+) as cofactor.

It localises to the cytoplasm. The enzyme catalyses tRNA(Thr) + L-threonine + ATP = L-threonyl-tRNA(Thr) + AMP + diphosphate + H(+). Its function is as follows. Catalyzes the attachment of threonine to tRNA(Thr) in a two-step reaction: L-threonine is first activated by ATP to form Thr-AMP and then transferred to the acceptor end of tRNA(Thr). Also edits incorrectly charged L-seryl-tRNA(Thr). This is Threonine--tRNA ligase from Alkalilimnicola ehrlichii (strain ATCC BAA-1101 / DSM 17681 / MLHE-1).